Here is a 195-residue protein sequence, read N- to C-terminus: MEVILLERVAKLGQMGELVRVKDGFARNFLLPRGKALRATAANREKYEHMKADLEARNIAAKAEATKVAEKIDGQNVVVIRQASEGGQLFGSVSVRDIIASFDGQGVKIDRSQVLLDAPIKTIGKHSIQVAVHPEVEVAVSVTVARSAEEAERINRGEDISTRREDEDAAAEALAAAGEFFDPDAQFGEEQPTEE.

Belongs to the bacterial ribosomal protein bL9 family.

Functionally, binds to the 23S rRNA. The polypeptide is Large ribosomal subunit protein bL9 (Rhodopseudomonas palustris (strain TIE-1)).